A 327-amino-acid polypeptide reads, in one-letter code: tRNA dimethylallyltransferase (327 aa).

Residue 14–21 (GPTASGKT) participates in ATP binding. Residue 16–21 (TASGKT) coordinates substrate. Interaction with substrate tRNA stretches follow at residues 39-42 (DSAL) and 163-167 (QRIQR).

It belongs to the IPP transferase family. As to quaternary structure, monomer. Requires Mg(2+) as cofactor.

It catalyses the reaction adenosine(37) in tRNA + dimethylallyl diphosphate = N(6)-dimethylallyladenosine(37) in tRNA + diphosphate. Catalyzes the transfer of a dimethylallyl group onto the adenine at position 37 in tRNAs that read codons beginning with uridine, leading to the formation of N6-(dimethylallyl)adenosine (i(6)A). In Xanthomonas euvesicatoria pv. vesicatoria (strain 85-10) (Xanthomonas campestris pv. vesicatoria), this protein is tRNA dimethylallyltransferase.